Reading from the N-terminus, the 119-residue chain is MKSWTAAVLSLGLIYLSISQNEGATTEFPTMNYEGRCALDMFTLIEVGDTFNYRHACLSYTCMKRDETFYVQVHTCDAPHFENVTSGMICNFTPPTTGNFPDCCLKVNCIAHLNHTSAN.

Residues 1–19 (MKSWTAAVLSLGLIYLSIS) form the signal peptide.

Belongs to the scoloptoxin-16 family. Contains 4 disulfide bonds. In terms of tissue distribution, expressed by the venom gland.

Its subcellular location is the secreted. The polypeptide is U-scoloptoxin(16)-Er11a (Ethmostigmus rubripes (Giant centipede)).